Consider the following 90-residue polypeptide: Darcynin 1 (90 aa).

This sequence belongs to the darcynin family.

The polypeptide is Darcynin 1 (Acinetobacter baumannii (strain ATCC 17978 / DSM 105126 / CIP 53.77 / LMG 1025 / NCDC KC755 / 5377)).